A 239-amino-acid chain; its full sequence is Mannose-binding protein A (239 aa).

Positions 1–18 (MLLLPLLPVLLCVVSVSS) are cleaved as a signal peptide. Residues 35–88 (ACGRDGRDGPKGEKGEPGQGLRGLQGPPGKLGPPGSVGSPGSPGPKGQKGDHGD) form a disordered region. The Collagen-like domain occupies 37–89 (GRDGRDGPKGEKGEPGQGLRGLQGPPGKLGPPGSVGSPGSPGPKGQKGDHGDN). The span at 38–50 (RDGRDGPKGEKGE) shows a compositional bias: basic and acidic residues. Proline 44 carries the post-translational modification 4-hydroxyproline. 5-hydroxylysine occurs at positions 45 and 48. O-linked (Gal...) hydroxylysine glycosylation is found at lysine 45 and lysine 48. 4-hydroxyproline is present on residues proline 51, proline 62, proline 68, proline 74, and proline 79. Positions 58–74 (LQGPPGKLGPPGSVGSP) are enriched in low complexity. 5-hydroxylysine occurs at positions 80 and 83. O-linked (Gal...) hydroxylysine glycosylation is found at lysine 80 and lysine 83. The 96-residue stretch at 144-239 (SLCTELQGTV…SFKAVCEFPA (96 aa)) folds into the C-type lectin domain. 2 disulfide bridges follow: cysteine 146–cysteine 235 and cysteine 213–cysteine 227. Residues aspartate 179, glutamate 183, glutamate 203, asparagine 205, glutamate 211, aspartate 212, asparagine 223, and aspartate 224 each coordinate Ca(2+). Residues 203–211 (EPNNHGSGE) are calcium-dependent carbohydrate binding.

In terms of assembly, homotrimer. Forms higher oligomeric complexes formed by the association of two, three or more homotrimers. Oligomerization occurs in the endoplasmic reticulum. Interacts with MASP1 and MASP2. Post-translationally, hydroxylated on lysine and proline residues within the collagen-like domain. O-glycosylated. O-linked glycans on hydroxylysine residues consist of Glc-Gal disaccharides bound to the oxygen atom of post-translationally added hydroxyl groups. As to expression, detected in liver and blood serum (at protein level). Detected in liver.

It localises to the secreted. In terms of biological role, calcium-dependent lectin. Plays a role in the innate immune response by binding mannose, fucose and N-acetylglucosamine moieties on different microorganisms and mediating activation of the lectin complement pathway. Binds to late apoptotic cells, as well as to apoptotic blebs and to necrotic cells, but not to early apoptotic cells, facilitating their uptake by macrophages. In Mus musculus (Mouse), this protein is Mannose-binding protein A (Mbl1).